A 257-amino-acid chain; its full sequence is Caspase-14 (257 aa).

Residues His-93 and Cys-136 contribute to the active site. A propeptide spanning residues 156–167 is cleaved from the precursor; that stretch reads DEELGGDEVAVL.

Belongs to the peptidase C14A family. As to quaternary structure, heterodimer of a large and a small subunit, both processed from the precursor; the mature active form is a p17/p10 dimer and the intermediate form a p20/p8 dimer. In terms of processing, maturation by proteolytic processing appears to be a two-step process. The precursor is processed by KLK7 to yield the p20/p8 intermediate form which acts the precursor to yield the p17/p10 mature form. Initially it was reported that cleavage by granzyme B, caspase-8 and -10 generates the two active subunits, however the physiological relevance has not been established. Embryo, adult liver and less in adult brain and kidney. Expressed in differentiating keratinocytes of embryonic skin (at protein level). Expressed in keratinocytes of adult skin suprabasal layers (at protein level).

It localises to the cytoplasm. The protein resides in the nucleus. Functionally, non-apoptotic caspase which is involved in epidermal differentiation. Seems to play a role in keratinocyte differentiation and is required for cornification. Regulates maturation of the epidermis by proteolytically processing filaggrin. In vitro is equally active on the synthetic caspase substrates WEHD-ACF and IETD-AFC. Involved in processing of prosaposin in the epidermis. May be involved in retinal pigment epithelium cell barrier function. This is Caspase-14 (Casp14) from Mus musculus (Mouse).